The chain runs to 483 residues: Probable glycosyltransferase 6 (483 aa).

Residues 1–40 (MAASETAPFGVSAASKGGGGVAGARAQHGQLAVAGRVHDA) lie on the Cytoplasmic side of the membrane. Residues 41-61 (LVFAAGAVAAVLVLLATASFL) form a helical; Signal-anchor for type II membrane protein membrane-spanning segment. Residues 62–483 (SPMPVTNLVA…PLPFDYPAAR (422 aa)) are Lumenal-facing. An N-linked (GlcNAc...) asparagine glycan is attached at Asn144.

Belongs to the glycosyltransferase 34 family.

Its subcellular location is the golgi apparatus membrane. Functionally, probable glycosyltransferase that may be involved in the biosynthesis of xyloglucan. The protein is Probable glycosyltransferase 6 of Oryza sativa subsp. indica (Rice).